A 240-amino-acid chain; its full sequence is Probable septum site-determining protein MinC (240 aa).

This sequence belongs to the MinC family. In terms of assembly, interacts with MinD and FtsZ.

Cell division inhibitor that blocks the formation of polar Z ring septums. Rapidly oscillates between the poles of the cell to destabilize FtsZ filaments that have formed before they mature into polar Z rings. Prevents FtsZ polymerization. The protein is Probable septum site-determining protein MinC of Acinetobacter baumannii (strain ACICU).